The chain runs to 447 residues: uncharacterized protein (447 aa).

Residues 29-201 (VDVYPLVFVF…TQYTFKVHRA (173 aa)) form the FAD-binding PCMH-type domain.

This sequence belongs to the oxygen-dependent FAD-linked oxidoreductase family. The cofactor is FAD.

It localises to the spore coat. This is an uncharacterized protein from Bacillus subtilis (strain 168).